The following is a 110-amino-acid chain: NAD(P)H-quinone oxidoreductase subunit M (110 aa).

It belongs to the complex I NdhM subunit family. NDH-1 can be composed of about 15 different subunits; different subcomplexes with different compositions have been identified which probably have different functions.

The protein localises to the cellular thylakoid membrane. It catalyses the reaction a plastoquinone + NADH + (n+1) H(+)(in) = a plastoquinol + NAD(+) + n H(+)(out). The enzyme catalyses a plastoquinone + NADPH + (n+1) H(+)(in) = a plastoquinol + NADP(+) + n H(+)(out). NDH-1 shuttles electrons from an unknown electron donor, via FMN and iron-sulfur (Fe-S) centers, to quinones in the respiratory and/or the photosynthetic chain. The immediate electron acceptor for the enzyme in this species is believed to be plastoquinone. Couples the redox reaction to proton translocation, and thus conserves the redox energy in a proton gradient. Cyanobacterial NDH-1 also plays a role in inorganic carbon-concentration. The protein is NAD(P)H-quinone oxidoreductase subunit M of Synechococcus elongatus (strain ATCC 33912 / PCC 7942 / FACHB-805) (Anacystis nidulans R2).